Reading from the N-terminus, the 697-residue chain is Polyribonucleotide nucleotidyltransferase (697 aa).

Mg(2+)-binding residues include Asp488 and Asp494. Positions 555 to 614 (PTLLTLKINPDKIRDVIGKGGATIRALTEETGCTIDIEDDGSVKIYGETREKADEAVRRV) constitute a KH domain. The region spanning 624 to 692 (GAIYEGKVTR…QRGRIKLSMK (69 aa)) is the S1 motif domain.

Belongs to the polyribonucleotide nucleotidyltransferase family. Component of the RNA degradosome, which is a multiprotein complex involved in RNA processing and mRNA degradation. Mg(2+) serves as cofactor.

Its subcellular location is the cytoplasm. It catalyses the reaction RNA(n+1) + phosphate = RNA(n) + a ribonucleoside 5'-diphosphate. Involved in mRNA degradation. Catalyzes the phosphorolysis of single-stranded polyribonucleotides processively in the 3'- to 5'-direction. This Alcanivorax borkumensis (strain ATCC 700651 / DSM 11573 / NCIMB 13689 / SK2) protein is Polyribonucleotide nucleotidyltransferase.